Reading from the N-terminus, the 64-residue chain is uncharacterized protein (64 aa).

The segment at 35 to 64 is disordered; that stretch reads TIRKPPIEHAAGPLGSTSRAGHRSYGGVAS.

This is an uncharacterized protein from Mycobacterium tuberculosis (strain ATCC 25618 / H37Rv).